Consider the following 265-residue polypeptide: Cytochrome c oxidase subunit 3 (265 aa).

Helical transmembrane passes span 41 to 61, 85 to 105, 137 to 157, 162 to 182, 200 to 220, and 245 to 265; these read GGAR…FVWW, GFIL…WAFF, TLIL…ILAG, AVYA…FQGM, FFLA…FLII, and WHFV…WGGI.

It belongs to the cytochrome c oxidase subunit 3 family. As to quaternary structure, component of the cytochrome c oxidase (complex IV, CIV), a multisubunit enzyme composed of a catalytic core of 3 subunits and several supernumerary subunits. The complex exists as a monomer or a dimer and forms supercomplexes (SCs) in the inner mitochondrial membrane with ubiquinol-cytochrome c oxidoreductase (cytochrome b-c1 complex, complex III, CIII).

The protein localises to the mitochondrion inner membrane. The enzyme catalyses 4 Fe(II)-[cytochrome c] + O2 + 8 H(+)(in) = 4 Fe(III)-[cytochrome c] + 2 H2O + 4 H(+)(out). Component of the cytochrome c oxidase, the last enzyme in the mitochondrial electron transport chain which drives oxidative phosphorylation. The respiratory chain contains 3 multisubunit complexes succinate dehydrogenase (complex II, CII), ubiquinol-cytochrome c oxidoreductase (cytochrome b-c1 complex, complex III, CIII) and cytochrome c oxidase (complex IV, CIV), that cooperate to transfer electrons derived from NADH and succinate to molecular oxygen, creating an electrochemical gradient over the inner membrane that drives transmembrane transport and the ATP synthase. Cytochrome c oxidase is the component of the respiratory chain that catalyzes the reduction of oxygen to water. Electrons originating from reduced cytochrome c in the intermembrane space (IMS) are transferred via the dinuclear copper A center (CU(A)) of subunit 2 and heme A of subunit 1 to the active site in subunit 1, a binuclear center (BNC) formed by heme A3 and copper B (CU(B)). The BNC reduces molecular oxygen to 2 water molecules using 4 electrons from cytochrome c in the IMS and 4 protons from the mitochondrial matrix. This is Cytochrome c oxidase subunit 3 (COX3) from Arabidopsis thaliana (Mouse-ear cress).